The primary structure comprises 89 residues: Small ribosomal subunit protein uS15 (89 aa).

Residues 1–21 (MSITAERKAEVIKDNARDKGD) are compositionally biased toward basic and acidic residues. The segment at 1–26 (MSITAERKAEVIKDNARDKGDTGSPE) is disordered.

This sequence belongs to the universal ribosomal protein uS15 family. In terms of assembly, part of the 30S ribosomal subunit. Forms a bridge to the 50S subunit in the 70S ribosome, contacting the 23S rRNA.

In terms of biological role, one of the primary rRNA binding proteins, it binds directly to 16S rRNA where it helps nucleate assembly of the platform of the 30S subunit by binding and bridging several RNA helices of the 16S rRNA. Functionally, forms an intersubunit bridge (bridge B4) with the 23S rRNA of the 50S subunit in the ribosome. This chain is Small ribosomal subunit protein uS15, found in Sphingopyxis alaskensis (strain DSM 13593 / LMG 18877 / RB2256) (Sphingomonas alaskensis).